Consider the following 715-residue polypeptide: Ribosomal RNA large subunit methyltransferase K/L (715 aa).

In terms of domain architecture, THUMP spans 47–158 (LGYKISLWTR…RDNVTIFLDF (112 aa)).

This sequence belongs to the methyltransferase superfamily. RlmKL family.

It localises to the cytoplasm. The catalysed reaction is guanosine(2445) in 23S rRNA + S-adenosyl-L-methionine = N(2)-methylguanosine(2445) in 23S rRNA + S-adenosyl-L-homocysteine + H(+). It catalyses the reaction guanosine(2069) in 23S rRNA + S-adenosyl-L-methionine = N(2)-methylguanosine(2069) in 23S rRNA + S-adenosyl-L-homocysteine + H(+). In terms of biological role, specifically methylates the guanine in position 2445 (m2G2445) and the guanine in position 2069 (m7G2069) of 23S rRNA. The sequence is that of Ribosomal RNA large subunit methyltransferase K/L from Colwellia psychrerythraea (strain 34H / ATCC BAA-681) (Vibrio psychroerythus).